Reading from the N-terminus, the 699-residue chain is Elongation factor G (699 aa).

The tr-type G domain occupies 8–283 (EHIRNIGICA…AIVDFLPSPI (276 aa)). Residues 17–24 (AHIDAGKT), 81–85 (DTPGH), and 135–138 (NKMD) each bind GTP.

The protein belongs to the TRAFAC class translation factor GTPase superfamily. Classic translation factor GTPase family. EF-G/EF-2 subfamily.

It is found in the cytoplasm. Catalyzes the GTP-dependent ribosomal translocation step during translation elongation. During this step, the ribosome changes from the pre-translocational (PRE) to the post-translocational (POST) state as the newly formed A-site-bound peptidyl-tRNA and P-site-bound deacylated tRNA move to the P and E sites, respectively. Catalyzes the coordinated movement of the two tRNA molecules, the mRNA and conformational changes in the ribosome. In Rickettsia typhi (strain ATCC VR-144 / Wilmington), this protein is Elongation factor G.